The chain runs to 2216 residues: RNA-directed RNA polymerase L (2216 aa).

The tract at residues 26–289 (KTSFLSQVNL…ETRTAMLDER (264 aa)) is endonuclease. The Mn(2+) site is built by Glu-51, Asp-88, and Glu-101. The active site involves Lys-114. A RdRp catalytic domain is found at 1167–1364 (LDMKCVVRLS…YLSSKFNKFV (198 aa)). Asp-1323 is a binding site for Mg(2+).

Belongs to the Bunyavirales RNA polymerase family. In terms of assembly, homomultimer; the oligomeric structure is essential for the polymerase activity. Interacts with nucleoprotein N. Interacts with protein Z; this interaction inhibits viral transcription and replication, Z partially blocks the product exit tunnel for the releasing nascent RNA product. Requires Mn(2+) as cofactor. Mg(2+) serves as cofactor.

The protein localises to the virion. It is found in the host cytoplasm. The enzyme catalyses RNA(n) + a ribonucleoside 5'-triphosphate = RNA(n+1) + diphosphate. RNA-dependent RNA polymerase, which is responsible for the replication and transcription of the viral RNA genome using antigenomic RNA as an intermediate. During transcription, synthesizes subgenomic RNAs and assures their capping by a cap-snatching mechanism, which involves the endonuclease activity cleaving the host capped pre-mRNAs. These short capped RNAs are then used as primers for viral transcription. The 3'-end of subgenomic mRNAs molecules are heterogeneous and not polyadenylated. The replicase function is to direct synthesis of antigenomic and genomic RNA which are encapsidated and non capped. As a consequence of the use of the same enzyme for both transcription and replication, these mechanisms need to be well coordinated. These processes may be regulated by proteins N and Z in a dose-dependent manner. Z protein inhibits the viral polymerase L und thus the viral transcription and RNA synthesis. This Bear Canyon mammarenavirus (isolate Mouse/United States/AV A0070039/2000) (BCNV) protein is RNA-directed RNA polymerase L.